A 252-amino-acid chain; its full sequence is Lipoprotein PrgK (252 aa).

The signal sequence occupies residues 1-17 (MIRRYLYTFLLVMTLAG). The N-palmitoyl cysteine moiety is linked to residue Cys-18. Cys-18 carries S-diacylglycerol cysteine lipidation. A helical membrane pass occupies residues 207 to 227 (FATSWIVLIILLSVMSAGFGV).

Belongs to the YscJ lipoprotein family.

It is found in the cell outer membrane. Functionally, required for invasion of epithelial cells. Could be involved in protein secretion. This Salmonella typhimurium (strain LT2 / SGSC1412 / ATCC 700720) protein is Lipoprotein PrgK (prgK).